Reading from the N-terminus, the 238-residue chain is Probable transcriptional regulatory protein IL0164 (238 aa).

It belongs to the TACO1 family.

Its subcellular location is the cytoplasm. This Idiomarina loihiensis (strain ATCC BAA-735 / DSM 15497 / L2-TR) protein is Probable transcriptional regulatory protein IL0164.